A 339-amino-acid chain; its full sequence is Methylthioribose-1-phosphate isomerase (339 aa).

Substrate-binding positions include Arg-49–Ala-51, Arg-86, and Gln-187. The active-site Proton donor is Asp-228. Asn-238–Lys-239 contacts substrate.

This sequence belongs to the eIF-2B alpha/beta/delta subunits family. MtnA subfamily.

It catalyses the reaction 5-(methylsulfanyl)-alpha-D-ribose 1-phosphate = 5-(methylsulfanyl)-D-ribulose 1-phosphate. It participates in amino-acid biosynthesis; L-methionine biosynthesis via salvage pathway; L-methionine from S-methyl-5-thio-alpha-D-ribose 1-phosphate: step 1/6. Functionally, catalyzes the interconversion of methylthioribose-1-phosphate (MTR-1-P) into methylthioribulose-1-phosphate (MTRu-1-P). This chain is Methylthioribose-1-phosphate isomerase, found in Cronobacter sakazakii (strain ATCC BAA-894) (Enterobacter sakazakii).